Consider the following 89-residue polypeptide: Large ribosomal subunit protein uL23c (89 aa).

Belongs to the universal ribosomal protein uL23 family. In terms of assembly, part of the 50S ribosomal subunit.

The protein resides in the plastid. It is found in the chloroplast. Its function is as follows. Binds to 23S rRNA. The chain is Large ribosomal subunit protein uL23c (rpl23) from Staurastrum punctulatum (Green alga).